The sequence spans 300 residues: Protease HtpX homolog (300 aa).

2 helical membrane-spanning segments follow: residues 7 to 24 and 29 to 46; these read GILM…GALI and GAII…FTFW. Histidine 130 contributes to the Zn(2+) binding site. Residue glutamate 131 is part of the active site. Histidine 134 contacts Zn(2+). The next 2 membrane-spanning stretches (helical) occupy residues 145–165 and 174–194; these read VTAT…FFGG and PMGL…AGLV. A Zn(2+)-binding site is contributed by glutamate 203.

This sequence belongs to the peptidase M48B family. The cofactor is Zn(2+).

The protein localises to the cell inner membrane. The protein is Protease HtpX homolog of Cereibacter sphaeroides (strain ATCC 17029 / ATH 2.4.9) (Rhodobacter sphaeroides).